Here is a 311-residue protein sequence, read N- to C-terminus: tRNA-cytidine(32) 2-sulfurtransferase (311 aa).

The PP-loop motif signature appears at serine 47–serine 52. [4Fe-4S] cluster-binding residues include cysteine 122, cysteine 125, and cysteine 213.

It belongs to the TtcA family. As to quaternary structure, homodimer. The cofactor is Mg(2+). Requires [4Fe-4S] cluster as cofactor.

It localises to the cytoplasm. It carries out the reaction cytidine(32) in tRNA + S-sulfanyl-L-cysteinyl-[cysteine desulfurase] + AH2 + ATP = 2-thiocytidine(32) in tRNA + L-cysteinyl-[cysteine desulfurase] + A + AMP + diphosphate + H(+). It participates in tRNA modification. Its function is as follows. Catalyzes the ATP-dependent 2-thiolation of cytidine in position 32 of tRNA, to form 2-thiocytidine (s(2)C32). The sulfur atoms are provided by the cysteine/cysteine desulfurase (IscS) system. The protein is tRNA-cytidine(32) 2-sulfurtransferase of Citrobacter koseri (strain ATCC BAA-895 / CDC 4225-83 / SGSC4696).